A 470-amino-acid polypeptide reads, in one-letter code: Mucin-like protein 3 (470 aa).

The signal sequence occupies residues 1-29 (MAQMTSGLYPMFGFFICLLFLPASWEAGA). At 30–401 (NTFQELQKTG…EGSNSFPAWA (372 aa)) the chain is on the extracellular side. Disordered stretches follow at residues 57-234 (RALS…HTIP) and 248-318 (TKEA…KAPE). Positions 75 to 87 (STATQKPKRQCNT) are enriched in polar residues. N-linked (GlcNAc...) asparagine glycosylation occurs at Asn122. Residues 132 to 152 (ARNERSADDHGSTNSEKRSDG) are compositionally biased toward basic and acidic residues. Residues 169–193 (TRTSGTPVSSTETSTKLRTTSQKPE) are compositionally biased toward polar residues. Residues 194–203 (TSSHDSDLIR) show a composition bias toward basic and acidic residues. Positions 204–222 (KSTSLPVKSTEVSRTSYRT) are enriched in polar residues. Residues 260 to 273 (KYERETRSASERIS) show a composition bias toward basic and acidic residues. Polar residues predominate over residues 283–295 (HTPSAGETTTQVS). Residue Asn325 is glycosylated (N-linked (GlcNAc...) asparagine). A helical transmembrane segment spans residues 402-422 (IVVVILMAVIILLIFLGLIFL). Residues 423–470 (VSCASRARHQLTQNSEDAEPEDKGGRNSYPVYLMEQQNLNLNQISSPP) are Cytoplasmic-facing.

It is found in the cell membrane. Its subcellular location is the cytoplasm. Its function is as follows. May modulate NF-kappaB signaling and play a role in cell growth. In Rattus norvegicus (Rat), this protein is Mucin-like protein 3.